The following is a 501-amino-acid chain: Glutamate--tRNA ligase (501 aa).

The 'HIGH' region signature appears at 11-21; the sequence is PSPTGFLHIGN. The 'KMSKS' region signature appears at 257 to 261; that stretch reads KLSKR. Lysine 260 contributes to the ATP binding site.

It belongs to the class-I aminoacyl-tRNA synthetase family. Glutamate--tRNA ligase type 1 subfamily. As to quaternary structure, monomer.

The protein resides in the cytoplasm. The enzyme catalyses tRNA(Glu) + L-glutamate + ATP = L-glutamyl-tRNA(Glu) + AMP + diphosphate. Functionally, catalyzes the attachment of glutamate to tRNA(Glu) in a two-step reaction: glutamate is first activated by ATP to form Glu-AMP and then transferred to the acceptor end of tRNA(Glu). This is Glutamate--tRNA ligase from Limosilactobacillus reuteri subsp. reuteri (strain JCM 1112) (Lactobacillus reuteri).